We begin with the raw amino-acid sequence, 553 residues long: Phosphoenolpyruvate carboxykinase (ATP) (553 aa).

Residues 1 to 22 (MAPPTAVGSSINFEGHPTIKST) are disordered. 255–262 (GLSGTGKT) contributes to the ATP binding site.

The protein belongs to the phosphoenolpyruvate carboxykinase (ATP) family.

The enzyme catalyses oxaloacetate + ATP = phosphoenolpyruvate + ADP + CO2. The protein operates within carbohydrate biosynthesis; gluconeogenesis. The sequence is that of Phosphoenolpyruvate carboxykinase (ATP) (PCK1) from Candida albicans (Yeast).